Reading from the N-terminus, the 143-residue chain is Nucleoside diphosphate kinase (143 aa).

Lys-11, Phe-59, Arg-87, Thr-93, Arg-104, and Asn-114 together coordinate ATP. The active-site Pros-phosphohistidine intermediate is His-117.

The protein belongs to the NDK family. As to quaternary structure, homotetramer. Mg(2+) serves as cofactor.

The protein localises to the cytoplasm. The enzyme catalyses a 2'-deoxyribonucleoside 5'-diphosphate + ATP = a 2'-deoxyribonucleoside 5'-triphosphate + ADP. The catalysed reaction is a ribonucleoside 5'-diphosphate + ATP = a ribonucleoside 5'-triphosphate + ADP. Major role in the synthesis of nucleoside triphosphates other than ATP. The ATP gamma phosphate is transferred to the NDP beta phosphate via a ping-pong mechanism, using a phosphorylated active-site intermediate. The polypeptide is Nucleoside diphosphate kinase (Shewanella frigidimarina (strain NCIMB 400)).